The primary structure comprises 267 residues: 4-hydroxy-tetrahydrodipicolinate reductase (267 aa).

Residues 8 to 13 (GAGGRM) and Glu-34 each bind NAD(+). Arg-35 provides a ligand contact to NADP(+). Residues 98-100 (GTT) and 122-125 (APNM) each bind NAD(+). His-155 functions as the Proton donor/acceptor in the catalytic mechanism. His-156 provides a ligand contact to (S)-2,3,4,5-tetrahydrodipicolinate. Lys-159 serves as the catalytic Proton donor. 165 to 166 (GT) provides a ligand contact to (S)-2,3,4,5-tetrahydrodipicolinate.

Belongs to the DapB family.

The protein resides in the cytoplasm. The enzyme catalyses (S)-2,3,4,5-tetrahydrodipicolinate + NAD(+) + H2O = (2S,4S)-4-hydroxy-2,3,4,5-tetrahydrodipicolinate + NADH + H(+). The catalysed reaction is (S)-2,3,4,5-tetrahydrodipicolinate + NADP(+) + H2O = (2S,4S)-4-hydroxy-2,3,4,5-tetrahydrodipicolinate + NADPH + H(+). Its pathway is amino-acid biosynthesis; L-lysine biosynthesis via DAP pathway; (S)-tetrahydrodipicolinate from L-aspartate: step 4/4. Catalyzes the conversion of 4-hydroxy-tetrahydrodipicolinate (HTPA) to tetrahydrodipicolinate. This is 4-hydroxy-tetrahydrodipicolinate reductase from Thioalkalivibrio sulfidiphilus (strain HL-EbGR7).